The following is a 305-amino-acid chain: Oxygen-dependent coproporphyrinogen-III oxidase (305 aa).

Ser-92 contributes to the substrate binding site. Positions 96 and 106 each coordinate a divalent metal cation. His-106 functions as the Proton donor in the catalytic mechanism. Asn-108 to Arg-110 is a binding site for substrate. Positions 145 and 175 each coordinate a divalent metal cation. The segment at Tyr-239–Glu-274 is important for dimerization. Gly-257–Arg-259 provides a ligand contact to substrate.

This sequence belongs to the aerobic coproporphyrinogen-III oxidase family. As to quaternary structure, homodimer. Requires a divalent metal cation as cofactor.

The protein localises to the cytoplasm. The enzyme catalyses coproporphyrinogen III + O2 + 2 H(+) = protoporphyrinogen IX + 2 CO2 + 2 H2O. It functions in the pathway porphyrin-containing compound metabolism; protoporphyrin-IX biosynthesis; protoporphyrinogen-IX from coproporphyrinogen-III (O2 route): step 1/1. In terms of biological role, involved in the heme biosynthesis. Catalyzes the aerobic oxidative decarboxylation of propionate groups of rings A and B of coproporphyrinogen-III to yield the vinyl groups in protoporphyrinogen-IX. This chain is Oxygen-dependent coproporphyrinogen-III oxidase, found in Xylella fastidiosa (strain M12).